A 274-amino-acid chain; its full sequence is Rhamnulose-1-phosphate aldolase (274 aa).

E117 is a catalytic residue. H141, H143, and H212 together coordinate Zn(2+).

Belongs to the aldolase class II family. RhaD subfamily. As to quaternary structure, homotetramer. Zn(2+) serves as cofactor.

The protein resides in the cytoplasm. It catalyses the reaction L-rhamnulose 1-phosphate = (S)-lactaldehyde + dihydroxyacetone phosphate. It participates in carbohydrate degradation; L-rhamnose degradation; glycerone phosphate from L-rhamnose: step 3/3. Catalyzes the reversible cleavage of L-rhamnulose-1-phosphate to dihydroxyacetone phosphate (DHAP) and L-lactaldehyde. The polypeptide is Rhamnulose-1-phosphate aldolase (Escherichia coli O45:K1 (strain S88 / ExPEC)).